The following is a 191-amino-acid chain: Phospholipase A2-delta (191 aa).

A signal peptide spans 1–25; it reads MIRGGALTHVALGLTVFLLLAVVHS. 6 disulfide bridges follow: Cys29/Cys56, Cys33/Cys62, Cys38/Cys115, Cys49/Cys69, Cys68/Cys93, and Cys75/Cys86. Positions 48, 50, and 53 each coordinate Ca(2+). His72 is a catalytic residue. Asp73 contributes to the Ca(2+) binding site. The disordered stretch occupies residues 161 to 191; the sequence is KADTKDGLGTNQGPQTKDGSKVSVPMNPSPS.

Belongs to the phospholipase A2 family. Requires Ca(2+) as cofactor. In terms of tissue distribution, specifically expressed in flowers but at a low level. Detected specifically in the pollen.

The protein resides in the secreted. The protein localises to the endoplasmic reticulum. It catalyses the reaction a 1,2-diacyl-sn-glycero-3-phosphocholine + H2O = a 1-acyl-sn-glycero-3-phosphocholine + a fatty acid + H(+). Functionally, PA2 catalyzes the calcium-dependent hydrolysis of the 2-acyl groups in 3-sn-phosphoglycerides. Releases lysophospholipids (LPLs) and free fatty acids (FFAs) from membrane phospholipids in response to hormones and other external stimuli. Plays a role in pollen development and germination and tube growth. In Arabidopsis thaliana (Mouse-ear cress), this protein is Phospholipase A2-delta (PLA2-DELTA).